Reading from the N-terminus, the 67-residue chain is MPKMKTKKSAAKRFRVRPGGTVKRGQAFKRHILTKKSTKNKRHLRGTATVHETNMGHMAQMLPFAGL.

Basic residues predominate over residues 1–16; that stretch reads MPKMKTKKSAAKRFRV. Residues 1–22 form a disordered region; it reads MPKMKTKKSAAKRFRVRPGGTV.

Belongs to the bacterial ribosomal protein bL35 family.

This is Large ribosomal subunit protein bL35 from Methylibium petroleiphilum (strain ATCC BAA-1232 / LMG 22953 / PM1).